The primary structure comprises 149 residues: MRCVVQRVREASVTIGGERFSSIGAGLLVLAGISREDTEADLAWMSRKLPNLRIFEDDEGRMNRSVKEIGGELLVVSQFTLYADASRGNRPGFTESAPSEVAQPLFDRFVELLRRESGLPVETGSFGADMQVSLINDGPVTIILESPKK.

Residues 138-139 (GP) carry the Gly-cisPro motif, important for rejection of L-amino acids motif.

It belongs to the DTD family. As to quaternary structure, homodimer.

It localises to the cytoplasm. It carries out the reaction glycyl-tRNA(Ala) + H2O = tRNA(Ala) + glycine + H(+). It catalyses the reaction a D-aminoacyl-tRNA + H2O = a tRNA + a D-alpha-amino acid + H(+). Its function is as follows. An aminoacyl-tRNA editing enzyme that deacylates mischarged D-aminoacyl-tRNAs. Also deacylates mischarged glycyl-tRNA(Ala), protecting cells against glycine mischarging by AlaRS. Acts via tRNA-based rather than protein-based catalysis; rejects L-amino acids rather than detecting D-amino acids in the active site. By recycling D-aminoacyl-tRNA to D-amino acids and free tRNA molecules, this enzyme counteracts the toxicity associated with the formation of D-aminoacyl-tRNA entities in vivo and helps enforce protein L-homochirality. The protein is D-aminoacyl-tRNA deacylase of Chlorobaculum parvum (strain DSM 263 / NCIMB 8327) (Chlorobium vibrioforme subsp. thiosulfatophilum).